The chain runs to 409 residues: Isovaleryl-CoA dehydrogenase, mitochondrial (409 aa).

Residues 1–22 (MAAAQRWLPGILRRGDGLARRL) constitute a mitochondrion transit peptide. FAD-binding positions include 151 to 160 (LAMSEPNSGS) and 184 to 186 (WCT). S160 contributes to the substrate binding site. Substrate-binding positions include 206 to 207 (SK), Y261, and 268 to 271 (DLER). Catalysis depends on E270, which acts as the Proton acceptor. Residues R296, Q307, and 364–368 (QCLGG) each bind FAD. 391–392 (AG) lines the substrate pocket. An FAD-binding site is contributed by 393-395 (TSE).

It belongs to the acyl-CoA dehydrogenase family. As to quaternary structure, homodimer. Requires FAD as cofactor.

The protein localises to the mitochondrion. It catalyses the reaction 3-methylbutanoyl-CoA + oxidized [electron-transfer flavoprotein] + H(+) = 3-methylbut-2-enoyl-CoA + reduced [electron-transfer flavoprotein]. The protein operates within amino-acid degradation; L-leucine degradation; (S)-3-hydroxy-3-methylglutaryl-CoA from 3-isovaleryl-CoA: step 1/3. The chain is Isovaleryl-CoA dehydrogenase, mitochondrial from Oryza sativa subsp. japonica (Rice).